A 374-amino-acid chain; its full sequence is Proteasomal ubiquitin receptor ADRM1 homolog (374 aa).

The Pru domain occupies 13–131; the sequence is SSSGHIVEFK…KKVTDALNKP (119 aa). Disordered stretches follow at residues 126 to 166, 187 to 223, and 334 to 374; these read DALN…MNAP, SDTL…NPLS, and ANLT…MDVD. Composition is skewed to polar residues over residues 141–163 and 209–223; these read SAGS…SSDM and PSTN…NPLS. Positions 239-346 constitute a DEUBAD domain; sequence SQKKEVAVSL…TKAEGGEDAA (108 aa). Basic and acidic residues predominate over residues 354-368; the sequence is DATREPEPKRNRPDN.

This sequence belongs to the ADRM1 family. In terms of assembly, component of the 19S proteasome regulatory particle complex. The 26S proteasome consists of a 20S core particle (CP) and two 19S regulatory subunits (RP). Interacts with deubiquitinase ubh-4.

Its subcellular location is the cytoplasm. It is found in the nucleus. In terms of biological role, may function as a proteasomal ubiquitin receptor. May promote the deubiquitinating activity associated with the 26S proteasome. The polypeptide is Proteasomal ubiquitin receptor ADRM1 homolog (Caenorhabditis elegans).